The sequence spans 259 residues: Caffeoyl-CoA O-methyltransferase (259 aa).

Lys33 is a binding site for substrate. Residues Thr75, Glu97, 99–100 (GV), Ser105, Asp123, and Ala152 contribute to the S-adenosyl-L-methionine site. Residue Asp175 coordinates substrate. Residue Asp175 participates in a divalent metal cation binding. Residue Asp177 participates in S-adenosyl-L-methionine binding. Asp201 and Asn202 together coordinate a divalent metal cation. Asn206 contacts substrate.

Belongs to the class I-like SAM-binding methyltransferase superfamily. Cation-dependent O-methyltransferase family. CCoAMT subfamily. A divalent metal cation is required as a cofactor.

It catalyses the reaction (E)-caffeoyl-CoA + S-adenosyl-L-methionine = (E)-feruloyl-CoA + S-adenosyl-L-homocysteine + H(+). It participates in aromatic compound metabolism; phenylpropanoid biosynthesis. Methylates caffeoyl-CoA to feruloyl-CoA and 5-hydroxyferuloyl-CoA to sinapoyl-CoA. Plays a role in the synthesis of feruloylated polysaccharides. Involved in the reinforcement of the plant cell wall. Also involved in the responding to wounding or pathogen challenge by the increased formation of cell wall-bound ferulic acid polymers. The protein is Caffeoyl-CoA O-methyltransferase (CCOAOMT) of Pinus taeda (Loblolly pine).